The sequence spans 649 residues: Acetyl-coenzyme A synthetase (649 aa).

CoA-binding positions include 191–194, T311, and N335; that span reads RAGR. ATP is bound by residues 387–389, 411–416, D500, and R515; these read GEP and DTWWQT. S523 is a CoA binding site. R526 provides a ligand contact to ATP. Mg(2+)-binding residues include V537, F539, and I542. Position 584 (R584) interacts with CoA. N6-acetyllysine is present on K609.

This sequence belongs to the ATP-dependent AMP-binding enzyme family. Mg(2+) serves as cofactor. Post-translationally, acetylated. Deacetylation by the SIR2-homolog deacetylase activates the enzyme.

The enzyme catalyses acetate + ATP + CoA = acetyl-CoA + AMP + diphosphate. Its function is as follows. Catalyzes the conversion of acetate into acetyl-CoA (AcCoA), an essential intermediate at the junction of anabolic and catabolic pathways. AcsA undergoes a two-step reaction. In the first half reaction, AcsA combines acetate with ATP to form acetyl-adenylate (AcAMP) intermediate. In the second half reaction, it can then transfer the acetyl group from AcAMP to the sulfhydryl group of CoA, forming the product AcCoA. The polypeptide is Acetyl-coenzyme A synthetase (Photobacterium profundum (strain SS9)).